The primary structure comprises 558 residues: Urease subunit alpha 2 (558 aa).

In terms of domain architecture, Urease spans 129-558 (GAVDTHVHLL…SVSLNRLYFL (430 aa)). Positions 134, 136, and 214 each coordinate Ni(2+). Lys214 carries the post-translational modification N6-carboxylysine. Substrate is bound at residue His216. His243 and His269 together coordinate Ni(2+). His317 (proton donor) is an active-site residue. Residue Asp357 coordinates Ni(2+).

Belongs to the metallo-dependent hydrolases superfamily. Urease alpha subunit family. As to quaternary structure, may form a heterohexamer of 3 UreC (alpha) and 3 UreAB (gamma/beta) subunits. May also form a heterotrimer of UreA (gamma), UreB (beta) and UreC (alpha) subunits. Three heterotrimers associate to form the active enzyme. The cofactor is Ni cation. Carboxylation allows a single lysine to coordinate two nickel ions.

The protein resides in the cytoplasm. It catalyses the reaction urea + 2 H2O + H(+) = hydrogencarbonate + 2 NH4(+). It participates in nitrogen metabolism; urea degradation; CO(2) and NH(3) from urea (urease route): step 1/1. The protein is Urease subunit alpha 2 of Streptomyces coelicolor (strain ATCC BAA-471 / A3(2) / M145).